A 265-amino-acid chain; its full sequence is 3-methyl-2-oxobutanoate hydroxymethyltransferase (265 aa).

Mg(2+)-binding residues include Asp41 and Asp80. Residues 41–42, Asp80, and Lys110 each bind 3-methyl-2-oxobutanoate; that span reads DS. Glu112 contacts Mg(2+). Catalysis depends on Glu179, which acts as the Proton acceptor.

The protein belongs to the PanB family. Homodecamer; pentamer of dimers. Mg(2+) serves as cofactor.

It is found in the cytoplasm. It carries out the reaction 3-methyl-2-oxobutanoate + (6R)-5,10-methylene-5,6,7,8-tetrahydrofolate + H2O = 2-dehydropantoate + (6S)-5,6,7,8-tetrahydrofolate. Its pathway is cofactor biosynthesis; (R)-pantothenate biosynthesis; (R)-pantoate from 3-methyl-2-oxobutanoate: step 1/2. Its function is as follows. Catalyzes the reversible reaction in which hydroxymethyl group from 5,10-methylenetetrahydrofolate is transferred onto alpha-ketoisovalerate to form ketopantoate. In Pseudothermotoga lettingae (strain ATCC BAA-301 / DSM 14385 / NBRC 107922 / TMO) (Thermotoga lettingae), this protein is 3-methyl-2-oxobutanoate hydroxymethyltransferase.